We begin with the raw amino-acid sequence, 234 residues long: MAENHCELLPPAPSGLGAGLGGGLCRRCSAGMGALAQRPGGVSKWVRLNVGGTYFLTTRQTLCRDPKSFLYRLCQADPDLDSDKDETGAYLIDRDPTYFGPVLNYLRHGKLVINKDLAEEGVLEEAEFYNITSLIKLVKDKIRERDSRISQMPVKHVYRVLQCQEEELTQMVSTMSDGWKFEQLVSIGSSYNYGNEDQAEFLCVVSKELHNTPYGTTSEPSEKAKILQERGSRM.

Ala2 carries the post-translational modification N-acetylalanine. One can recognise a BTB domain in the interval 44 to 146 (KWVRLNVGGT…LVKDKIRERD (103 aa)). Residues 213–234 (PYGTTSEPSEKAKILQERGSRM) form a disordered region. Residues 220-234 (PSEKAKILQERGSRM) are compositionally biased toward basic and acidic residues.

In terms of assembly, homopentamer. Interacts (via C-terminus) with GRASP55/GORASP2. Interacts with CUL3 and with ubiquitinated proteins. Interacts with CRY1.

The protein localises to the cytoplasm. It localises to the cytosol. The protein resides in the nucleus. Functionally, its interaction with CUL3 suggests that it may act as a substrate adapter in some E3 ligase complex. Does not affect the function of Kv channel Kv2.1/KCNB1, Kv1.2/KCNA2, Kv4.2/KCND2 and Kv3.4/KCNC4. This is BTB/POZ domain-containing protein KCTD5 (Kctd5) from Mus musculus (Mouse).